The sequence spans 281 residues: Fibrinogen-like protein 1-like protein (281 aa).

A signal peptide spans Met-1–Ala-33. The Fibrinogen C-terminal domain occupies Thr-34–Met-246. 2 cysteine pairs are disulfide-bonded: Cys-43/Cys-69 and Cys-201/Cys-213. Residues Pro-260–Pro-269 show a composition bias toward low complexity. A disordered region spans residues Pro-260–Gln-281. Residues Ile-270 to Gln-281 show a composition bias toward polar residues.

Expressed in smal intestine, colon and lung.

In terms of biological role, shows a cytidine deaminase activity on 2'-deoxycytidine (in vitro), however shows no RNA editing activity (in vitro). The chain is Fibrinogen-like protein 1-like protein from Gallus gallus (Chicken).